A 463-amino-acid chain; its full sequence is L-seryl-tRNA(Sec) selenium transferase (463 aa).

Position 295 is an N6-(pyridoxal phosphate)lysine (lysine 295).

This sequence belongs to the SelA family. In terms of assembly, homodecamer; pentamer of dimers. Binds only one seryl-tRNA(Sec) per dimer. Requires pyridoxal 5'-phosphate as cofactor.

The protein resides in the cytoplasm. It catalyses the reaction L-seryl-tRNA(Sec) + selenophosphate + H(+) = L-selenocysteinyl-tRNA(Sec) + phosphate. It participates in aminoacyl-tRNA biosynthesis; selenocysteinyl-tRNA(Sec) biosynthesis; selenocysteinyl-tRNA(Sec) from L-seryl-tRNA(Sec) (bacterial route): step 1/1. In terms of biological role, converts seryl-tRNA(Sec) to selenocysteinyl-tRNA(Sec) required for selenoprotein biosynthesis. The polypeptide is L-seryl-tRNA(Sec) selenium transferase (Escherichia coli O45:K1 (strain S88 / ExPEC)).